The primary structure comprises 876 residues: GRB2-associated and regulator of MAPK protein (876 aa).

The tract at residues 9–318 (KDVKWSSASF…NLIKGEVWQD (310 aa)) is CABIT. Tyr-451 is modified (phosphotyrosine). 2 disordered regions span residues 460-569 (SVKR…TLSY) and 708-741 (DRML…LSEP). The segment covering 461–471 (VKRSGQPLTRS) has biased composition (polar residues). Pro residues predominate over residues 532 to 549 (PPVPPRSSKPSSPTPSVP). Positions 556-569 (VRQQTRSPSPTLSY) are enriched in polar residues. Positions 811 to 876 (LSVEEVSKSL…QFINGWRPKM (66 aa)) constitute an SAM domain.

It belongs to the GAREM family.

In terms of biological role, adapter protein that may provide a link between cell surface epidermal growth factor receptor and the MAPK/ERK signaling pathway. May promote cell proliferation. This chain is GRB2-associated and regulator of MAPK protein (garem1), found in Xenopus laevis (African clawed frog).